A 570-amino-acid chain; its full sequence is Hydroxylamine reductase (570 aa).

Cysteine 5, cysteine 8, cysteine 17, and cysteine 23 together coordinate [4Fe-4S] cluster. Residues histidine 266, glutamate 290, cysteine 334, cysteine 425, cysteine 453, cysteine 478, glutamate 513, and lysine 515 each contribute to the hybrid [4Fe-2O-2S] cluster site. Cysteine 425 bears the Cysteine persulfide mark.

The protein belongs to the HCP family. Requires [4Fe-4S] cluster as cofactor. Hybrid [4Fe-2O-2S] cluster serves as cofactor.

It localises to the cytoplasm. The enzyme catalyses A + NH4(+) + H2O = hydroxylamine + AH2 + H(+). Its function is as follows. Catalyzes the reduction of hydroxylamine to form NH(3) and H(2)O. The protein is Hydroxylamine reductase of Clostridium botulinum (strain 657 / Type Ba4).